Here is a 174-residue protein sequence, read N- to C-terminus: Interleukin-1 receptor antagonist protein (174 aa).

The signal sequence occupies residues 1–23 (MDIYIHGYLICLLLFLFRSETAC). A disulfide bond links C89 and C139. Residue N107 is glycosylated (N-linked (GlcNAc...) asparagine).

It belongs to the IL-1 family.

It is found in the secreted. Functionally, anti-inflammatory antagonist of interleukin-1 family of proinflammatory cytokines such as interleukin-1beta/IL1B and interleukin-1alpha/IL1A. Protects from immune dysregulation and uncontrolled systemic inflammation triggered by IL1 for a range of innate stimulatory agents such as pathogens. This is Interleukin-1 receptor antagonist protein (IL1RN) from Bos taurus (Bovine).